The following is a 353-amino-acid chain: Rhodopsin (353 aa).

Residues Met1–Ala36 are Extracellular-facing. N-linked (GlcNAc...) asparagine glycans are attached at residues Asn2 and Asn15. The chain crosses the membrane as a helical span at residues Tyr37–Val61. Over Thr62 to Asn73 the chain is Cytoplasmic. A helical membrane pass occupies residues Tyr74–Tyr96. At Thr97–Cys110 the chain is on the extracellular side. A disulfide bridge links Cys110 with Cys187. The chain crosses the membrane as a helical span at residues Asn111 to Val133. The 'Ionic lock' involved in activated form stabilization signature appears at Glu134–Trp136. Over Glu134–His152 the chain is Cytoplasmic. The helical transmembrane segment at Ala153–Val173 threads the bilayer. Topologically, residues Gly174–Ser202 are extracellular. N-linked (GlcNAc...) asparagine glycosylation is present at Asn200. Residues Phe203–Gly224 form a helical membrane-spanning segment. Residues Arg225–Arg252 lie on the Cytoplasmic side of the membrane. A helical membrane pass occupies residues Met253–Tyr274. The Extracellular segment spans residues Ile275–Val286. A helical transmembrane segment spans residues Phe287–Leu308. An N6-(retinylidene)lysine modification is found at Lys296. Over Met309–Ala353 the chain is Cytoplasmic. Residues Cys322 and Cys323 are each lipidated (S-palmitoyl cysteine). Positions Glu331–Ala353 are disordered. The span at Ala334 to Ala353 shows a compositional bias: low complexity.

The protein belongs to the G-protein coupled receptor 1 family. Opsin subfamily. Phosphorylated on some or all of the serine and threonine residues present in the C-terminal region. In terms of processing, contains one covalently linked retinal chromophore.

It is found in the membrane. The protein resides in the cell projection. Its subcellular location is the cilium. It localises to the photoreceptor outer segment. Functionally, photoreceptor required for image-forming vision at low light intensity. While most salt water fish species use retinal as chromophore, most freshwater fish use 3-dehydroretinal, or a mixture of retinal and 3-dehydroretinal. Light-induced isomerization of 11-cis to all-trans retinal triggers a conformational change that activates signaling via G-proteins. Subsequent receptor phosphorylation mediates displacement of the bound G-protein alpha subunit by arrestin and terminates signaling. This is Rhodopsin (rho) from Dicentrarchus labrax (European seabass).